The chain runs to 193 residues: Protein GrpE (193 aa).

Residues 1–26 are disordered; it reads MTKKHHKEQEEIQETIKTEAAEENVG. Positions 7–20 are enriched in basic and acidic residues; it reads KEQEEIQETIKTEA.

The protein belongs to the GrpE family. In terms of assembly, homodimer.

It localises to the cytoplasm. Functionally, participates actively in the response to hyperosmotic and heat shock by preventing the aggregation of stress-denatured proteins, in association with DnaK and GrpE. It is the nucleotide exchange factor for DnaK and may function as a thermosensor. Unfolded proteins bind initially to DnaJ; upon interaction with the DnaJ-bound protein, DnaK hydrolyzes its bound ATP, resulting in the formation of a stable complex. GrpE releases ADP from DnaK; ATP binding to DnaK triggers the release of the substrate protein, thus completing the reaction cycle. Several rounds of ATP-dependent interactions between DnaJ, DnaK and GrpE are required for fully efficient folding. This chain is Protein GrpE, found in Chlorobaculum parvum (strain DSM 263 / NCIMB 8327) (Chlorobium vibrioforme subsp. thiosulfatophilum).